The sequence spans 342 residues: Trans-3-hydroxy-L-proline dehydratase (342 aa).

The active-site Proton acceptor is the S90. Substrate is bound by residues 91–92, D252, and 257–258; these read GS and GT.

It belongs to the proline racemase family.

It catalyses the reaction trans-3-hydroxy-L-proline = 1-pyrroline-2-carboxylate + H2O. Functionally, catalyzes the dehydration of trans-3-hydroxy-L-proline (t3LHyp) to Delta(1)-pyrroline-2-carboxylate (Pyr2C). Can also catalyze the epimerization of trans-4-hydroxy-L-proline (t4LHyp) to cis-4-hydroxy-D-proline (c4DHyp), albeit with 150-fold lower efficiency. May be involved in the degradation pathway that converts t3LHyp to L-proline, which would allow R.meliloti to grow on t3LHyp as a sole carbon source. Displays no proline racemase activity. The protein is Trans-3-hydroxy-L-proline dehydratase of Rhizobium meliloti (strain 1021) (Ensifer meliloti).